A 346-amino-acid polypeptide reads, in one-letter code: Tyrosine--tRNA ligase (346 aa).

Residue Y35 coordinates L-tyrosine. The 'HIGH' region signature appears at 40–48 (PTGEMHIGH). Residues Y162, Q166, D169, and Q184 each coordinate L-tyrosine.

The protein belongs to the class-I aminoacyl-tRNA synthetase family. TyrS type 3 subfamily. In terms of assembly, homodimer.

The protein resides in the cytoplasm. The enzyme catalyses tRNA(Tyr) + L-tyrosine + ATP = L-tyrosyl-tRNA(Tyr) + AMP + diphosphate + H(+). Functionally, catalyzes the attachment of tyrosine to tRNA(Tyr) in a two-step reaction: tyrosine is first activated by ATP to form Tyr-AMP and then transferred to the acceptor end of tRNA(Tyr). This Haloarcula marismortui (strain ATCC 43049 / DSM 3752 / JCM 8966 / VKM B-1809) (Halobacterium marismortui) protein is Tyrosine--tRNA ligase.